A 267-amino-acid polypeptide reads, in one-letter code: Carboxy-S-adenosyl-L-methionine synthase (267 aa).

Residues 1–11 (MPNRDTQSQND) show a composition bias toward polar residues. The interval 1-25 (MPNRDTQSQNDTPRHSPEAAEPQRD) is disordered. The segment covering 12–24 (TPRHSPEAAEPQR) has biased composition (basic and acidic residues). S-adenosyl-L-methionine contacts are provided by residues tyrosine 59, 84 to 86 (GCS), 109 to 110 (DN), 137 to 138 (DI), asparagine 152, and arginine 219.

This sequence belongs to the class I-like SAM-binding methyltransferase superfamily. Cx-SAM synthase family. Homodimer.

It carries out the reaction prephenate + S-adenosyl-L-methionine = carboxy-S-adenosyl-L-methionine + 3-phenylpyruvate + H2O. Its function is as follows. Catalyzes the conversion of S-adenosyl-L-methionine (SAM) to carboxy-S-adenosyl-L-methionine (Cx-SAM). In Yersinia pseudotuberculosis serotype O:1b (strain IP 31758), this protein is Carboxy-S-adenosyl-L-methionine synthase.